A 523-amino-acid chain; its full sequence is MTNIHNHKILILDFGSQYTQLIARRVREIGVYCELWAWDVTEQQIREFAPTGIILSGSPESTTEENSPRAPEYVFNASVPVLGICYGMQTMAMQLGGLTETSDHREFGYASVSLENSTALFANLNDNSTASEPKLDVWMSHGDKVTRLPENFKVTGTTPTCPIAAMSDENRRFYGVQFHPEVTHTKKGLELLTNFVVNICGCETKWTAENIIEDAVARIKEQVGDDEVILGLSGGVDSSVVALLLHRAIGKNLHCVFVDNGLLRLHEGDQVMEMFGDKFGLNITRVDAESRFLGELAGVSDPEAKRKIIGKVFVDVFDDESKKLTNVKWLAQGTIYPDVIESAASKTGKAHVIKSHHNVGGLPDYMKLGLVEPLRELFKDEVRKIGLALGLPAEMINRHPFPGPGLGVRVLGEVKKEYCDLLRRADAIFIEELRNSGWYEKTSQAFSVFLPVKSVGVMGDGRKYDWVISLRAVETIDFMTAHWAHLPYDLLGKVSNRIINEVNGISRVVYDISGKPPATIEWE.

Positions 8 to 205 (KILILDFGSQ…VVNICGCETK (198 aa)) constitute a Glutamine amidotransferase type-1 domain. Cysteine 85 (nucleophile) is an active-site residue. Active-site residues include histidine 179 and glutamate 181. Residues 206-398 (WTAENIIEDA…LGLPAEMINR (193 aa)) form the GMPS ATP-PPase domain. An ATP-binding site is contributed by 233-239 (SGGVDSS).

In terms of assembly, homodimer.

The enzyme catalyses XMP + L-glutamine + ATP + H2O = GMP + L-glutamate + AMP + diphosphate + 2 H(+). It functions in the pathway purine metabolism; GMP biosynthesis; GMP from XMP (L-Gln route): step 1/1. Catalyzes the synthesis of GMP from XMP. In Haemophilus influenzae (strain 86-028NP), this protein is GMP synthase [glutamine-hydrolyzing].